The chain runs to 486 residues: tRNA sulfurtransferase (486 aa).

The 105-residue stretch at 63-167 folds into the THUMP domain; that stretch reads DAFAERLGCI…HEKLYMVVRR (105 aa). ATP-binding positions include 185-186, Lys-267, Gly-289, and Gln-298; that span reads LI. Cys-346 and Cys-460 are disulfide-bonded. A Rhodanese domain is found at 408–486; that stretch reads VDTQEVVIDI…GYTNVKVYRP (79 aa). Cys-460 (cysteine persulfide intermediate) is an active-site residue.

The protein belongs to the ThiI family.

It localises to the cytoplasm. The enzyme catalyses [ThiI sulfur-carrier protein]-S-sulfanyl-L-cysteine + a uridine in tRNA + 2 reduced [2Fe-2S]-[ferredoxin] + ATP + H(+) = [ThiI sulfur-carrier protein]-L-cysteine + a 4-thiouridine in tRNA + 2 oxidized [2Fe-2S]-[ferredoxin] + AMP + diphosphate. It catalyses the reaction [ThiS sulfur-carrier protein]-C-terminal Gly-Gly-AMP + S-sulfanyl-L-cysteinyl-[cysteine desulfurase] + AH2 = [ThiS sulfur-carrier protein]-C-terminal-Gly-aminoethanethioate + L-cysteinyl-[cysteine desulfurase] + A + AMP + 2 H(+). The protein operates within cofactor biosynthesis; thiamine diphosphate biosynthesis. Catalyzes the ATP-dependent transfer of a sulfur to tRNA to produce 4-thiouridine in position 8 of tRNAs, which functions as a near-UV photosensor. Also catalyzes the transfer of sulfur to the sulfur carrier protein ThiS, forming ThiS-thiocarboxylate. This is a step in the synthesis of thiazole, in the thiamine biosynthesis pathway. The sulfur is donated as persulfide by IscS. In Shewanella denitrificans (strain OS217 / ATCC BAA-1090 / DSM 15013), this protein is tRNA sulfurtransferase.